Consider the following 300-residue polypeptide: 2-oxoglutarate-dependent dioxygenase DAO (300 aa).

The region spanning tryptophan 149–proline 252 is the Fe2OG dioxygenase domain. The Fe cation site is built by histidine 173, aspartate 175, and histidine 232. Position 242 (arginine 242) interacts with 2-oxoglutarate.

It belongs to the iron/ascorbate-dependent oxidoreductase family. The cofactor is Fe(2+).

2-oxoglutarate-dependent dioxygenase essential for auxin catabolism and maintenance of auxin homeostasis in reproductive organs. Catalyzes the irreversible oxidation of indole-3-acetic acid (IAA) to the biologically inactive 2-oxoindole-3-acetic acid (OxIAA). The chain is 2-oxoglutarate-dependent dioxygenase DAO (DAO) from Oryza sativa subsp. indica (Rice).